The chain runs to 376 residues: Chaperone protein DnaJ (376 aa).

The J domain occupies 4 to 70; that stretch reads DYYQILGVSK…QKRAAYDRFG (67 aa). The segment at 139-217 adopts a CR-type zinc-finger fold; it reads GVEKNISFSS…CHGLGRYHKQ (79 aa). Residues cysteine 152, cysteine 155, cysteine 169, cysteine 172, cysteine 191, cysteine 194, cysteine 205, and cysteine 208 each coordinate Zn(2+). CXXCXGXG motif repeat units follow at residues 152-159, 169-176, 191-198, and 205-212; these read CDTCHGSG, CDACGGVG, CHKCQGNG, and CKKCHGLG.

Belongs to the DnaJ family. As to quaternary structure, homodimer. It depends on Zn(2+) as a cofactor.

The protein resides in the cytoplasm. In terms of biological role, participates actively in the response to hyperosmotic and heat shock by preventing the aggregation of stress-denatured proteins and by disaggregating proteins, also in an autonomous, DnaK-independent fashion. Unfolded proteins bind initially to DnaJ; upon interaction with the DnaJ-bound protein, DnaK hydrolyzes its bound ATP, resulting in the formation of a stable complex. GrpE releases ADP from DnaK; ATP binding to DnaK triggers the release of the substrate protein, thus completing the reaction cycle. Several rounds of ATP-dependent interactions between DnaJ, DnaK and GrpE are required for fully efficient folding. Also involved, together with DnaK and GrpE, in the DNA replication of plasmids through activation of initiation proteins. The chain is Chaperone protein DnaJ from Rickettsia bellii (strain OSU 85-389).